Here is an 89-residue protein sequence, read N- to C-terminus: Large ribosomal subunit protein bL27 (89 aa).

A disordered region spans residues 1–20 (MAHKKAGGSSRNGRDSAGQR).

The protein belongs to the bacterial ribosomal protein bL27 family.

The polypeptide is Large ribosomal subunit protein bL27 (Paramagnetospirillum magneticum (strain ATCC 700264 / AMB-1) (Magnetospirillum magneticum)).